The chain runs to 1461 residues: A disintegrin and metalloproteinase with thrombospondin motifs adt-1 (1461 aa).

The N-terminal stretch at 1-21 (MPPFYIVITFLLSTVFRISQS) is a signal peptide. Residues 22–163 (VHHHLNEEEL…HLQKERHLVY (142 aa)) constitute a propeptide that is removed on maturation. An N-linked (GlcNAc...) asparagine glycan is attached at N69. Positions 190–197 (SFCDTSEQ) match the Cysteine switch motif. A glycan (N-linked (GlcNAc...) asparagine) is linked at N212. Residues 233 to 435 (ITLEIGLFLD…CSVREFNAFL (203 aa)) form the Peptidase M12B domain. A Zn(2+)-binding site is contributed by H388. E389 is an active-site residue. Zn(2+)-binding residues include H392 and H398. The cysteines at positions 405 and 410 are disulfide-linked. Residues 464–546 (RLPGQRFTAD…TFGLTPVPID (83 aa)) enclose the Disintegrin domain. TSP type-1 domains lie at 708–759 (HQWE…RDCE), 761–802 (FGEW…RPCD), 804–852 (EGCW…QKCI), 853–898 (SQSW…QQCP), 903–952 (LSVW…GPCE), 955–1000 (YLTW…IACL), 1035–1083 (SIHS…NSCL), 1087–1133 (IWSD…PSCS), 1148–1200 (APRW…GSCS), 1203–1260 (AGGW…NVCS), 1265–1321 (DGGW…ARCH), 1324–1378 (DGGW…PACD), and 1382–1435 (DGEW…RQSP). 3 cysteine pairs are disulfide-bonded: C719-C751, C723-C758, and C735-C741. Cystine bridges form between C816–C846, C820–C851, C831–C836, C862–C892, C866–C897, and C877–C882. Intrachain disulfides connect C1047-C1077, C1051-C1082, and C1062-C1067. Intrachain disulfides connect C1160/C1194, C1162/C1199, C1173/C1184, C1215/C1253, C1219/C1259, C1231/C1243, C1277/C1314, C1281/C1320, C1292/C1304, C1336/C1372, C1340/C1377, and C1351/C1362.

It depends on Zn(2+) as a cofactor. In terms of tissue distribution, in hermaphrodites, expressed in the vulva, head ganglia, ventral nerve cord and amphid neurons. Expressed in the rays of the male tail.

It is found in the secreted. Functionally, plays a role in ray morphogenesis in the male tail, probably by remodeling the extracellular matrix (ECM) in the cuticle. The chain is A disintegrin and metalloproteinase with thrombospondin motifs adt-1 from Caenorhabditis elegans.